Here is a 374-residue protein sequence, read N- to C-terminus: MRAPMLQKQQAPRMDTPPPEERLEKQNEKLNNQEEETEFKELDGLREALANLRGLSEEERSEKAMLRSRIEEQSQLICILKRRSDEALERCQILELLNAELEEKMMQEAEKLKAQGEYSRKLEERFMTLAANHELMLRFKDEYKSENIKLREENEKLRLENSSLFSQALKDEEAKVLQLTVRCEALTGELETLKERCAQDACQAQAREKELLELQSQQACTHTKETEQLRSQLQTLKQQHQQAVEQIAKAEETHSSLSQELQARLQTVTREKEELLQLSIERGKVLQNKQAEICQLEEKLEIANEDRKHALERFEQEAVAVDSNLRVRELQRKVDGIQKAYDELRLQSEAFKKHSLDLLSKERELNGKLRHLSP.

The segment at 1 to 40 (MRAPMLQKQQAPRMDTPPPEERLEKQNEKLNNQEEETEFK) is disordered. Phosphothreonine is present on Thr-16. The span at 19-32 (PEERLEKQNEKLNN) shows a compositional bias: basic and acidic residues. Residues 20–351 (EERLEKQNEK…DELRLQSEAF (332 aa)) adopt a coiled-coil conformation.

The protein belongs to the CCDC89 family. As to quaternary structure, interacts with HEY1.

The protein localises to the cytoplasm. It is found in the nucleus. This chain is Coiled-coil domain-containing protein 89 (CCDC89), found in Homo sapiens (Human).